The primary structure comprises 65 residues: Large ribosomal subunit protein bL35 (65 aa).

The protein belongs to the bacterial ribosomal protein bL35 family.

In Aliarcobacter butzleri (strain RM4018) (Arcobacter butzleri), this protein is Large ribosomal subunit protein bL35.